The sequence spans 115 residues: LSM complex subunit LSM7 (115 aa).

The span at 1-10 (MHQQHSKSEN) shows a compositional bias: basic and acidic residues. The tract at residues 1 to 23 (MHQQHSKSENKPQQQRKKFEGPK) is disordered. The 84-residue stretch at 25-108 (EAILDLAKYK…LVSLSSAEGS (84 aa)) folds into the Sm domain.

Belongs to the snRNP Sm proteins family. In terms of assembly, component of the heptameric LSM1-LSM7 complex that forms a seven-membered ring structure with a donut shape. The LSm subunits are arranged in the order LSM1, LSM2, LSM3, LSM6, LSM5, LSM7 and LSM4. Except for LSM1, where a C-terminal helix crosses the ring structure to form additional interactions with LSM3 and LSM6, each subunit interacts only with its two neighboring subunits. The LSM1-LSM7 complex interacts with PAT1; within the complex PAT1 has direct interactions with LSM2 and LSM3. The LSM1-LSM7 complex interacts with XRN1. Component of the heptameric LSM2-LSM8 complex that forms a seven-membered ring structure with a donut shape; an RNA strand can pass through the hole in the center of the ring structure. The LSm subunits are arranged in the order LSM8, LSM2, LSM3, LSM6, LSM5, LSM7 and LSM4. Component of the spliceosome U4/U6-U5 tri-snRNP complex composed of the U4, U6 and U5 snRNAs and at least PRP3, PRP4, PRP6, PRP8, PRP18, PRP31, PRP38, SNU13, SNU23, SNU66, SNU114, SPP381, SMB1, SMD1, SMD2, SMD3, SMX2, SMX3, LSM2, LSM3, LSM4, LSM5, LSM6, LSM7, LSM8, BRR2 and DIB1. May be found in a complex comprising LSM2-LSM7 without LSM1 or LSM8; the complex associates with pre-P RNA and snoRNA SNR5.

Its subcellular location is the nucleus. It localises to the nucleolus. The protein resides in the cytoplasm. Its function is as follows. Component of LSm protein complexes, which are involved in RNA processing and may function in a chaperone-like manner. Component of the cytoplasmic LSM1-LSM7 complex which is involved in mRNA degradation by activating the decapping step. Together with PAT1, the LSM1-LSM7 complex binds to osmotic stress-activated mRNAs to attenuate the osmotic stress response, probably by limiting ribosome access to the mRNA and consequently translation. Component of the nuclear LSM2-LSM8 complex, which is involved in spliceosome assembly. The LSM2-LSM8 complex plays a role in the biogenesis of the spliceosomal U4/U6-U5 tri-snRNP complex by accelerating PRP24-mediated annealing of U4/U6 di-snRNA. The LSM2-LSM8 complex binds U6 snRNA terminating with a non-cyclic 3' phosphate group. LSM2-LSM8 is probably also involved in degradation of nuclear pre-mRNA by targeting them for decapping. LSM2-LSM8 could be involved in processing of pre-tRNAs, pre-rRNAs and U3 snoRNA, although involvement may be indirect. In a complex that probably contains LSM2-LSM7, but not LSM1 or LSM8, associates with the precursor of the RNA component of RNase P (pre-P RNA) and may be involved in maturing pre-P RNA; the complex also associates with snoRNA SNR5. This Saccharomyces cerevisiae (strain ATCC 204508 / S288c) (Baker's yeast) protein is LSM complex subunit LSM7 (LSM7).